The following is a 633-amino-acid chain: DNA mismatch repair protein MutL (633 aa).

Belongs to the DNA mismatch repair MutL/HexB family.

Its function is as follows. This protein is involved in the repair of mismatches in DNA. It is required for dam-dependent methyl-directed DNA mismatch repair. May act as a 'molecular matchmaker', a protein that promotes the formation of a stable complex between two or more DNA-binding proteins in an ATP-dependent manner without itself being part of a final effector complex. The sequence is that of DNA mismatch repair protein MutL from Bacillus pumilus (strain SAFR-032).